The sequence spans 345 residues: Acetylserotonin O-methyltransferase (345 aa).

S-adenosyl-L-methionine-binding positions include Tyr147, Trp164, Asp210, 235 to 237 (GDF), and Arg252. The active-site Proton donor/acceptor is His255. Substrate-binding residues include Asp256, Asn302, and Gln306.

The protein belongs to the class I-like SAM-binding methyltransferase superfamily. Cation-independent O-methyltransferase family. Homodimer. Expressed in the pineal gland (at protein level). In the retina, very low expression is found at the mRNA level, and not at the protein level.

It carries out the reaction N-acetylserotonin + S-adenosyl-L-methionine = melatonin + S-adenosyl-L-homocysteine + H(+). Its pathway is aromatic compound metabolism; melatonin biosynthesis; melatonin from serotonin: step 1/2. In terms of biological role, catalyzes the transfer of a methyl group onto N-acetylserotonin, producing melatonin (N-acetyl-5-methoxytryptamine). Functionally, does not show Acetylserotonin O-methyltransferase activity. The protein is Acetylserotonin O-methyltransferase (ASMT) of Homo sapiens (Human).